A 197-amino-acid chain; its full sequence is Phosphoheptose isomerase (197 aa).

An SIS domain is found at 36–197; sequence LFAALANNGR…IDALLLGDTE (162 aa). 51–53 is a substrate binding site; the sequence is NGG. Residues H60 and E64 each contribute to the Zn(2+) site. Residues E64, 93-94, 119-121, S124, and Q174 contribute to the substrate site; these read ND and STS. Positions 174 and 182 each coordinate Zn(2+).

Belongs to the SIS family. GmhA subfamily. In terms of assembly, homotetramer. Requires Zn(2+) as cofactor.

The protein localises to the cytoplasm. It carries out the reaction 2 D-sedoheptulose 7-phosphate = D-glycero-alpha-D-manno-heptose 7-phosphate + D-glycero-beta-D-manno-heptose 7-phosphate. Its pathway is carbohydrate biosynthesis; D-glycero-D-manno-heptose 7-phosphate biosynthesis; D-glycero-alpha-D-manno-heptose 7-phosphate and D-glycero-beta-D-manno-heptose 7-phosphate from sedoheptulose 7-phosphate: step 1/1. Functionally, catalyzes the isomerization of sedoheptulose 7-phosphate in D-glycero-D-manno-heptose 7-phosphate. The protein is Phosphoheptose isomerase of Bordetella avium (strain 197N).